The following is a 1255-amino-acid chain: Structural polyprotein (1255 aa).

A necessary for nucleocapsid assembly and virus assembly region spans residues 1–33; it reads MFPFQPMYPMQPMPYRNPFAAPRRPWFPRTDPF. The segment at 33–68 is host transcription inhibition; that stretch reads FLAMQVQELTRSMANLTFKQRRDAPPEGPPAKKPKR. The Supraphysiological nuclear export signal motif lies at 41-48; that stretch reads LTRSMANL. Positions 44–119 are disordered; the sequence is SMANLTFKQR…KKPGKRQRMV (76 aa). Residues 64 to 68 carry the Nuclear localization signal motif; that stretch reads KKPKR. Residues 80–92 show a composition bias toward basic residues; the sequence is GKKKKNQGKKKAK. The segment at 91 to 127 is binding to the viral RNA; the sequence is AKTGPPNPKAQSGNKKKPNKKPGKRQRMVMKLESDKT. Position 93 is a phosphothreonine (T93). Positions 104-118 are enriched in basic residues; sequence NKKKPNKKPGKRQRM. The segment at 112–126 is ribosome-binding; that stretch reads PGKRQRMVMKLESDK. A Phosphoserine modification is found at S124. The Peptidase S3 domain occupies 126–275; the sequence is KTFPIMLEGK…KYTPENCEQW (150 aa). T127 carries the post-translational modification Phosphothreonine. Residue H152 is the Charge relay system of the active site. An interaction with spike glycoprotein E2 region spans residues 168 to 173; the sequence is KKASKY. Residues D174 and S226 each act as charge relay system in the active site. An interaction with spike glycoprotein E2 region spans residues 260–264; that stretch reads EKGVT. Residues 276-287 are functions as an uncleaved signal peptide for the precursor of protein E3/E2; it reads SLVTTMCLLANV. Residues 276-701 are Extracellular-facing; it reads SLVTTMCLLA…HYYHRYPMST (426 aa). Cystine bridges form between C282–C291, C353–C457, C356–C361, C424–C438, C485–C600, C534–C560, and C536–C554. N286 carries N-linked (GlcNAc...) asparagine; by host glycosylation. N-linked (GlcNAc...) asparagine; by host glycosylation occurs at N652. A helical transmembrane segment spans residues 702–722; the sequence is ILGLSICAAIVTVSVAASTWL. At 723–757 the chain is on the cytoplasmic side; it reads FCKSRVSCLTPYRLTPNARMPLCLAVLCCARTARA. Residues 725–729 form an interaction with the capsid protein region; that stretch reads KSRVS. Residues C730, C750, and C751 are each lipidated (S-palmitoyl cysteine; by host). The transient transmembrane before p62-6K protein processing stretch occupies residues 730–750; it reads CLTPYRLTPNARMPLCLAVLC. Residues C730 and C751 are joined by a disulfide bond. The Extracellular portion of the chain corresponds to 758-769; that stretch reads ETTWESLDHLWN. A helical transmembrane segment spans residues 770–790; the sequence is NNQQMFWIQLLIPLAALIVVT. Position 791 (R791) is a topological domain, cytoplasmic. The helical transmembrane segment at 792–812 threads the bilayer; the sequence is LLKCVCCVVPFLVVAGAAGAG. At 813–1225 the chain is on the extracellular side; it reads AYEHATTMPS…SKTAWTWLTS (413 aa). 4 disulfide bridges follow: C862–C927, C875–C907, C876–C909, and C881–C891. The E1 fusion peptide loop stretch occupies residues 897 to 914; sequence VYPFMWGGAYCFCDTENT. N-linked (GlcNAc...) asparagine; by host glycosylation is found at N947 and N1083. Disulfide bonds link C1072–C1084, C1114–C1189, C1119–C1193, and C1141–C1183. Residues 1226–1246 form a helical membrane-spanning segment; sequence LLGGSAVIIIIGLVLATIVAM. Over 1247–1255 the chain is Cytoplasmic; the sequence is YVLTNQKHN.

Homodimer. Homomultimer. Interacts with host karyopherin KPNA4; this interaction allows the nuclear import of the viral capsid protein. Interacts with spike glycoprotein E2. Interacts with host IRAK1; the interaction leads to inhibition of IRAK1-dependent signaling. Part of a tetrameric complex composed of host CRM1, host importin alpha/beta dimer and the viral capsid; this complex blocks the receptor-mediated transport through the nuclear pore. Interacts with host phosphatase PPP1CA; this interaction dephosphorylates the capsid protein, which increases its ability to bind to the viral genome. As to quaternary structure, the precursor of protein E3/E2 and E1 form a heterodimer shortly after synthesis. In terms of assembly, interacts with spike glycoprotein E2. The precursor of protein E3/E2 and E1 form a heterodimer shortly after synthesis. Processing of the precursor of protein E3/E2 into E2 and E3 results in a heterodimer of the spike glycoproteins E2 and E1. Spike at virion surface are constituted of three E2-E1 heterodimers. After target cell attachment and endocytosis, E1 change conformation to form homotrimers. Interacts with 6K protein. Interacts with host LDLRAD3; this interaction mediates viral entry to the host cell. Interacts with spike glycoprotein E1. Processing of the precursor of protein E3/E2 into E2 and E3 results in a heterodimer of the spike glycoproteins E2 and E1. Spike at virion surface are constituted of a trimer of E2-E1 heterodimers. Interacts with 6K protein. Interacts with host LDLRAD3; this interaction mediates viral entry to the host cell. As to quaternary structure, oligomer. Interacts with spike glycoprotein E1. Interacts with spike glycoprotein E2. Structural polyprotein: Specific enzymatic cleavages in vivo yield mature proteins. Capsid protein is auto-cleaved during polyprotein translation, unmasking a signal peptide at the N-terminus of the precursor of E3/E2. The remaining polyprotein is then targeted to the host endoplasmic reticulum, where host signal peptidase cleaves it into pE2, 6K and E1 proteins. pE2 is further processed to mature E3 and E2 by host furin in trans-Golgi vesicle. In terms of processing, phosphorylated on serine and threonine residues. Post-translationally, palmitoylated via thioester bonds. These palmitoylations may induce disruption of the C-terminus transmembrane. This would result in the reorientation of E2 C-terminus from lumenal to cytoplasmic side. N-glycosylated. In terms of processing, palmitoylated via thioester bonds.

The protein localises to the virion. Its subcellular location is the host cytoplasm. The protein resides in the host cell membrane. It is found in the host nucleus. It localises to the virion membrane. The protein localises to the host Golgi apparatus. Its subcellular location is the host trans-Golgi network. The protein resides in the host endoplasmic reticulum. The catalysed reaction is Autocatalytic release of the core protein from the N-terminus of the togavirus structural polyprotein by hydrolysis of a -Trp-|-Ser- bond.. In terms of biological role, forms an icosahedral capsid with a T=4 symmetry composed of 240 copies of the capsid protein surrounded by a lipid membrane through which penetrate 80 spikes composed of trimers of E1-E2 heterodimers. The capsid protein binds to the viral RNA genome at a site adjacent to a ribosome binding site for viral genome translation following genome release. Possesses a protease activity that results in its autocatalytic cleavage from the nascent structural protein. Following its self-cleavage, the capsid protein transiently associates with ribosomes, and within several minutes the protein binds to viral RNA and rapidly assembles into icosahedric core particles. The resulting nucleocapsid eventually associates with the cytoplasmic domain of the spike glycoprotein E2 at the cell membrane, leading to budding and formation of mature virions. In case of infection, new virions attach to target cells and after clathrin-mediated endocytosis their membrane fuses with the host endosomal membrane. This leads to the release of the nucleocapsid into the cytoplasm, followed by an uncoating event necessary for the genomic RNA to become accessible. The uncoating might be triggered by the interaction of capsid proteins with ribosomes. Binding of ribosomes would release the genomic RNA since the same region is genomic RNA-binding and ribosome-binding. Specifically inhibits interleukin-1 receptor-associated kinase 1/IRAK1-dependent signaling during viral entry, representing a means by which the alphaviruses may evade innate immune detection and activation prior to viral gene expression. Inhibits host transcription. Forms a tetrameric complex with XPO1/CRM1 and the nuclear import receptor importin. This complex blocks the central channel of host nuclear pores thereby inhibiting the receptor-mediated nuclear transport and thus the host mRNA and rRNA transcription. The inhibition of transcription is linked to a cytopathic effect on the host cell. Functionally, provides the signal sequence for the translocation of the precursor of protein E3/E2 to the host endoplasmic reticulum. Furin-cleaved E3 remains associated with spike glycoprotein E1 and mediates pH protection of the latter during the transport via the secretory pathway. After virion release from the host cell, the assembly protein E3 is gradually released in the extracellular space. Plays a role in viral attachment to target host cell, by binding to the cell receptor LDLRAD3. Synthesized as a p62 precursor which is processed by furin at the cell membrane just before virion budding, giving rise to E2-E1 heterodimer. The p62-E1 heterodimer is stable, whereas E2-E1 is unstable and dissociate at low pH. p62 is processed at the last step, presumably to avoid E1 fusion activation before its final export to cell surface. E2 C-terminus contains a transitory transmembrane that would be disrupted by palmitoylation, resulting in reorientation of the C-terminal tail from lumenal to cytoplasmic side. This step is critical since E2 C-terminus is involved in budding by interacting with capsid proteins. This release of E2 C-terminus in cytoplasm occurs lately in protein export, and precludes premature assembly of particles at the endoplasmic reticulum membrane. Its function is as follows. Acts as a viroporin that participates in virus glycoprotein processing and transport to the plasma membrane, cell permeabilization and budding of viral particles. Disrupts the calcium homeostasis of the cell, probably at the endoplasmic reticulum level. This leads to cytoplasmic calcium elevation. Because of its lipophilic properties, the 6K protein is postulated to influence the selection of lipids that interact with the transmembrane domains of the glycoproteins, which, in turn, affects the deformability of the bilayer required for the extreme curvature that occurs as budding proceeds. Present in low amount in virions, about 3% compared to viral glycoproteins. In terms of biological role, class II viral fusion protein. Fusion activity is inactive as long as E1 is bound to E2 in mature virion. After virus attachment to cell receptor LDLRAD3 and endocytosis, acidification of the endosome induce dissociation of E1/E2 heterodimer and concomitant trimerization of the E1 subunits. This E1 trimer is fusion active, and promotes release of viral nucleocapsid in cytoplasm after endosome and viral membrane fusion. Efficient fusion requires the presence of cholesterol and sphingolipid in the target membrane. The protein is Structural polyprotein of Venezuelan equine encephalitis virus (strain P676) (VEEV).